The sequence spans 445 residues: Chromosome partition protein MukF (445 aa).

Residues 212–240 (LDETSGNLRELQDTLNAAGDKLQEQLLRI) are leucine-zipper.

Belongs to the MukF family. Interacts, and probably forms a ternary complex, with MukE and MukB via its C-terminal region. The complex formation is stimulated by calcium or magnesium. It is required for an interaction between MukE and MukB.

The protein resides in the cytoplasm. It localises to the nucleoid. In terms of biological role, involved in chromosome condensation, segregation and cell cycle progression. May participate in facilitating chromosome segregation by condensation DNA from both sides of a centrally located replisome during cell division. Not required for mini-F plasmid partitioning. Probably acts via its interaction with MukB and MukE. Overexpression results in anucleate cells. It has a calcium binding activity. The sequence is that of Chromosome partition protein MukF from Mannheimia succiniciproducens (strain KCTC 0769BP / MBEL55E).